Consider the following 159-residue polypeptide: ATP synthase subunit b 2 (159 aa).

A helical membrane pass occupies residues 1–21 (MDATFWAFIALVIFVVIVVYM).

This sequence belongs to the ATPase B chain family. F-type ATPases have 2 components, F(1) - the catalytic core - and F(0) - the membrane proton channel. F(1) has five subunits: alpha(3), beta(3), gamma(1), delta(1), epsilon(1). F(0) has three main subunits: a(1), b(2) and c(10-14). The alpha and beta chains form an alternating ring which encloses part of the gamma chain. F(1) is attached to F(0) by a central stalk formed by the gamma and epsilon chains, while a peripheral stalk is formed by the delta and b chains.

Its subcellular location is the cell inner membrane. Functionally, f(1)F(0) ATP synthase produces ATP from ADP in the presence of a proton or sodium gradient. F-type ATPases consist of two structural domains, F(1) containing the extramembraneous catalytic core and F(0) containing the membrane proton channel, linked together by a central stalk and a peripheral stalk. During catalysis, ATP synthesis in the catalytic domain of F(1) is coupled via a rotary mechanism of the central stalk subunits to proton translocation. Its function is as follows. Component of the F(0) channel, it forms part of the peripheral stalk, linking F(1) to F(0). The protein is ATP synthase subunit b 2 of Brucella canis (strain ATCC 23365 / NCTC 10854 / RM-666).